We begin with the raw amino-acid sequence, 158 residues long: Snaclec mucetin subunit alpha (158 aa).

The N-terminal stretch at 1–23 is a signal peptide; it reads MGRFTFVSFGLLVVFLSLSGTGA. 3 disulfides stabilise this stretch: Cys-27–Cys-38, Cys-55–Cys-152, and Cys-127–Cys-144. Residues 34 to 153 enclose the C-type lectin domain; sequence YDRYCYQAFS…CGRENPFVCK (120 aa).

It belongs to the snaclec family. Dimer and tetramer of heterodimers of alpha and beta subunits ((alphabeta)(2) and (alphabeta)(4)); disulfide-linked. These two multimeric forms are found. The complex is glycosylated. As to expression, expressed by the venom gland.

It is found in the secreted. Its function is as follows. Potent platelet activator that acts via GPIb (GP1BA/GP1BB). After activation by the toxin, the receptor is redistributed on platelet surface thanks to cytoskeletal translocation. The indirect activation of integrin alpha-IIb/beta-3 (ITGA2B/ITGB3) also induced by the toxin is downstream the cytoskeletal translocation of GPIb. The polypeptide is Snaclec mucetin subunit alpha (Protobothrops mucrosquamatus (Taiwan habu)).